We begin with the raw amino-acid sequence, 728 residues long: Probable subtilase-type serine protease DR_A0283 (728 aa).

Positions 1 to 22 are cleaved as a signal peptide; the sequence is MPGALPMKKISLAVLSLTTLLA. A propeptide spanning residues 23-148 is cleaved from the precursor; sequence ACGQPQTSPQ…RTAQDQLGAQ (126 aa). One can recognise a Peptidase S8 domain in the interval 159–471; the sequence is QYALDSNHLH…YGLIRMDKLA (313 aa). Residues aspartate 188, histidine 242, and serine 412 each act as charge relay system in the active site.

It belongs to the peptidase S8 family.

Its subcellular location is the secreted. This is Probable subtilase-type serine protease DR_A0283 from Deinococcus radiodurans (strain ATCC 13939 / DSM 20539 / JCM 16871 / CCUG 27074 / LMG 4051 / NBRC 15346 / NCIMB 9279 / VKM B-1422 / R1).